The chain runs to 398 residues: ATP-dependent RNA helicase eIF4A (398 aa).

The short motif at 25 to 53 is the Q motif element; that stretch reads DSFDTMNLKPELLRGVYAYGFERPSAIQQ. A Helicase ATP-binding domain is found at 56 to 226; sequence IMPVIKGHDV…TKFMRDPVRI (171 aa). 69-76 is a binding site for ATP; the sequence is AQSGTGKT. Residues 174–177 carry the DEAD box motif; sequence DEAD. The 162-residue stretch at 237–398 folds into the Helicase C-terminal domain; the sequence is GIKQFYIAVE…EMPMNVADLI (162 aa).

Belongs to the DEAD box helicase family. eIF4A subfamily. In terms of assembly, component of the eIF4F complex, which composition varies with external and internal environmental conditions. It is composed of at least eIF4A, eIF4E and eIF4G.

Its subcellular location is the cytoplasm. It catalyses the reaction ATP + H2O = ADP + phosphate + H(+). Functionally, ATP-dependent RNA helicase which is a subunit of the eIF4F complex involved in cap recognition and is required for mRNA binding to ribosome. In the current model of translation initiation, eIF4A unwinds RNA secondary structures in the 5'-UTR of mRNAs which is necessary to allow efficient binding of the small ribosomal subunit, and subsequent scanning for the initiator codon. In Sclerotinia sclerotiorum (strain ATCC 18683 / 1980 / Ss-1) (White mold), this protein is ATP-dependent RNA helicase eIF4A (tif1).